The following is a 1024-amino-acid chain: Beta-galactosidase (1024 aa).

Residues Asn103 and Asp202 each coordinate substrate. Asp202 is a Na(+) binding site. Mg(2+) is bound by residues Glu417, His419, and Glu462. Residues Glu462 and 538-541 contribute to the substrate site; that span reads EYAH. Glu462 functions as the Proton donor in the catalytic mechanism. The Nucleophile role is filled by Glu538. Asn598 is a binding site for Mg(2+). Na(+)-binding residues include Phe602 and Asn605. Substrate is bound by residues Asn605 and Trp1000.

The protein belongs to the glycosyl hydrolase 2 family. Homotetramer. Mg(2+) is required as a cofactor. It depends on Na(+) as a cofactor.

The enzyme catalyses Hydrolysis of terminal non-reducing beta-D-galactose residues in beta-D-galactosides.. In Escherichia coli (strain SMS-3-5 / SECEC), this protein is Beta-galactosidase.